The primary structure comprises 140 residues: Large ribosomal subunit protein uL16 (140 aa).

It belongs to the universal ribosomal protein uL16 family. In terms of assembly, part of the 50S ribosomal subunit.

Its function is as follows. Binds 23S rRNA and is also seen to make contacts with the A and possibly P site tRNAs. In Cytophaga hutchinsonii (strain ATCC 33406 / DSM 1761 / CIP 103989 / NBRC 15051 / NCIMB 9469 / D465), this protein is Large ribosomal subunit protein uL16.